The primary structure comprises 479 residues: Glutamyl-tRNA reductase (479 aa).

Substrate is bound by residues 49-52 (TCNR), serine 109, 114-116 (EQQ), and glutamine 120. Cysteine 50 serves as the catalytic Nucleophile. 191-196 (GAGSMG) is a binding site for NADP(+).

It belongs to the glutamyl-tRNA reductase family. In terms of assembly, homodimer.

The catalysed reaction is (S)-4-amino-5-oxopentanoate + tRNA(Glu) + NADP(+) = L-glutamyl-tRNA(Glu) + NADPH + H(+). Its pathway is porphyrin-containing compound metabolism; protoporphyrin-IX biosynthesis; 5-aminolevulinate from L-glutamyl-tRNA(Glu): step 1/2. In terms of biological role, catalyzes the NADPH-dependent reduction of glutamyl-tRNA(Glu) to glutamate 1-semialdehyde (GSA). The protein is Glutamyl-tRNA reductase of Rhodococcus jostii (strain RHA1).